We begin with the raw amino-acid sequence, 568 residues long: Zinc finger protein 583 (568 aa).

In terms of domain architecture, KRAB spans 6–77; that stretch reads LTFEDVSVNF…QKKGARDTCP (72 aa). C2H2-type zinc fingers lie at residues 211 to 233, 239 to 261, 267 to 289, 295 to 317, 323 to 345, 351 to 373, 379 to 401, 407 to 429, 435 to 457, 463 to 485, 491 to 513, and 519 to 541; these read LKCS…QRIH, YACV…KRIH, YECK…QRVH, YQCK…QRIH, FECI…QRIH, YVCH…QRIH, YECA…QRSH, YICK…QRIH, YECN…QRIH, and YECK…EKVH.

This sequence belongs to the krueppel C2H2-type zinc-finger protein family.

It is found in the nucleus. Its function is as follows. May be involved in transcriptional regulation. This is Zinc finger protein 583 (Znf583) from Mus musculus (Mouse).